The primary structure comprises 582 residues: Hydrogen peroxide stress regulator 1 (582 aa).

4 disordered regions span residues 24–55 (SPFA…HNSS), 107–154 (YPSA…GISK), 347–366 (TSYN…SGET), and 375–422 (NTSG…GGKS). The segment covering 107–125 (YPSASFSTSQHPSQVYNDG) has biased composition (polar residues). Positions 126–143 (STLNSNNTTQQLNNNNGF) are enriched in low complexity. Polar residues predominate over residues 375–392 (NTSGRSPNSMEATEQIGT). A C2H2-type 1 zinc finger spans residues 423–446 (FVCPECSKKFKRSEHLRRHIRSLH). Residues 452 to 473 (FVCICGKRFSRRDNLRQHERLH) form a C2H2-type 2; atypical zinc finger.

It is found in the nucleus. Functionally, transcription factor that globally supports gene expression in response to hydrogen peroxide. The protein is Hydrogen peroxide stress regulator 1 (hsr1) of Schizosaccharomyces pombe (strain 972 / ATCC 24843) (Fission yeast).